Consider the following 371-residue polypeptide: Rab9 effector protein with kelch motifs (371 aa).

6 Kelch repeats span residues 47–93 (RVLL…FLSA), 98–144 (RLWV…TSSA), 149–201 (CLYV…AVGT), 202–251 (KLFI…VFKD), 252–301 (HLYI…VIPW), and 348–371 (LLLI…SLIE).

Its function is as follows. Rab9 effector required for endosome to trans-Golgi network (TGN) transport. This chain is Rab9 effector protein with kelch motifs (RABEPK), found in Gallus gallus (Chicken).